The following is a 60-amino-acid chain: uncharacterized protein (60 aa).

This is an uncharacterized protein from Methanocaldococcus jannaschii (strain ATCC 43067 / DSM 2661 / JAL-1 / JCM 10045 / NBRC 100440) (Methanococcus jannaschii).